The primary structure comprises 519 residues: Chaperone SurA (519 aa).

Residues 1–31 (MMRSLHSLRRMSGTVLALMLAAGLPLSAAQA) form the signal peptide. 2 stretches are compositionally biased toward low complexity: residues 31-45 (AQPAKPAPKGDQKPA) and 197-207 (PAAAQATRAPA). Disordered regions lie at residues 31–50 (AQPAKPAPKGDQKPATPAPS) and 196–221 (NPAAAQATRAPAPQQPQPQPRQPAQS). A PpiC 1 domain is found at 223–324 (PAMLVLAQIL…NGFHILKVVD (102 aa)). The disordered stretch occupies residues 328–361 (GGQPAQAARPAPAPAPQQPSSFQEGPSVAAPQGP). Residues 364–463 (VTQTHARHIL…FGWHLIQVLE (100 aa)) form the PpiC 2 domain.

The protein localises to the periplasm. It carries out the reaction [protein]-peptidylproline (omega=180) = [protein]-peptidylproline (omega=0). Its function is as follows. Chaperone involved in the correct folding and assembly of outer membrane proteins. Recognizes specific patterns of aromatic residues and the orientation of their side chains, which are found more frequently in integral outer membrane proteins. May act in both early periplasmic and late outer membrane-associated steps of protein maturation. The polypeptide is Chaperone SurA (Bordetella bronchiseptica (strain ATCC BAA-588 / NCTC 13252 / RB50) (Alcaligenes bronchisepticus)).